We begin with the raw amino-acid sequence, 503 residues long: Probable cytosol aminopeptidase (503 aa).

Mn(2+)-binding residues include Lys-268 and Asp-273. Lys-280 is an active-site residue. Mn(2+)-binding residues include Asp-291, Asp-350, and Glu-352. Residue Arg-354 is part of the active site.

It belongs to the peptidase M17 family. It depends on Mn(2+) as a cofactor.

The protein localises to the cytoplasm. It carries out the reaction Release of an N-terminal amino acid, Xaa-|-Yaa-, in which Xaa is preferably Leu, but may be other amino acids including Pro although not Arg or Lys, and Yaa may be Pro. Amino acid amides and methyl esters are also readily hydrolyzed, but rates on arylamides are exceedingly low.. The catalysed reaction is Release of an N-terminal amino acid, preferentially leucine, but not glutamic or aspartic acids.. Functionally, presumably involved in the processing and regular turnover of intracellular proteins. Catalyzes the removal of unsubstituted N-terminal amino acids from various peptides. The protein is Probable cytosol aminopeptidase of Nocardia farcinica (strain IFM 10152).